Here is a 294-residue protein sequence, read N- to C-terminus: Kynurenine formamidase (294 aa).

A compositionally biased stretch (basic and acidic residues) spans 1–14 (MSRWKDMNKDELER). The segment at 1-20 (MSRWKDMNKDELERQFSPSQ) is disordered. The HGGXW motif lies at 84–88 (HGGYW). Serine 153 functions as the Nucleophile in the catalytic mechanism. Catalysis depends on residues aspartate 236 and histidine 269.

The protein belongs to the kynurenine formamidase family. In terms of assembly, homodimer.

Its subcellular location is the cytoplasm. The protein localises to the cytosol. It localises to the nucleus. The enzyme catalyses N-formyl-L-kynurenine + H2O = L-kynurenine + formate + H(+). Its pathway is amino-acid degradation; L-tryptophan degradation via kynurenine pathway; L-kynurenine from L-tryptophan: step 2/2. Functionally, catalyzes the hydrolysis of N-formyl-L-kynurenine to L-kynurenine, the second step in the kynurenine pathway of tryptophan degradation. Kynurenine may be further oxidized to nicotinic acid, NAD(H) and NADP(H). Required for elimination of toxic metabolites. The polypeptide is Kynurenine formamidase (afmid) (Salmo salar (Atlantic salmon)).